The sequence spans 161 residues: Glycine cleavage system H protein 3 (161 aa).

The Lipoyl-binding domain maps to 40-122; it reads TVTLGLTDVG…YGDAWIVKIK (83 aa). An N6-lipoyllysine modification is found at Lys81.

The protein belongs to the GcvH family. As to quaternary structure, the glycine cleavage system is composed of four proteins: P, T, L and H. It depends on (R)-lipoate as a cofactor.

Its function is as follows. The glycine cleavage system catalyzes the degradation of glycine. The H protein shuttles the methylamine group of glycine from the P protein to the T protein. In Aquifex aeolicus (strain VF5), this protein is Glycine cleavage system H protein 3.